Reading from the N-terminus, the 389-residue chain is uncharacterized protein (389 aa).

This is an uncharacterized protein from Treponema pallidum (strain Nichols).